The following is a 399-amino-acid chain: uncharacterized protein (399 aa).

WD repeat units lie at residues 59 to 99 (EHKD…QICQ), 102 to 141 (GHKD…EFIT), 144 to 185 (ETVD…QVMY), 187 to 227 (HTAP…PECR), 241 to 280 (ETAA…ILAS), 283 to 322 (AQTE…FRKS), 324 to 363 (PHEQ…LLGE), and 366 to 399 (GHQE…DCEH).

Its subcellular location is the cytoplasm. It localises to the nucleus. This is an uncharacterized protein from Schizosaccharomyces pombe (strain 972 / ATCC 24843) (Fission yeast).